Consider the following 274-residue polypeptide: 3',5'-cyclic adenosine monophosphate phosphodiesterase CpdA (274 aa).

Fe cation-binding residues include Asp21, His23, Asp63, Asn93, His163, His202, and His204. Residues His23, Asp63, and 93–94 (NH) contribute to the AMP site. An AMP-binding site is contributed by His204.

It belongs to the cyclic nucleotide phosphodiesterase class-III family. Fe(2+) is required as a cofactor.

It catalyses the reaction 3',5'-cyclic AMP + H2O = AMP + H(+). In terms of biological role, hydrolyzes cAMP to 5'-AMP. Plays an important regulatory role in modulating the intracellular concentration of cAMP, thereby influencing cAMP-dependent processes. The sequence is that of 3',5'-cyclic adenosine monophosphate phosphodiesterase CpdA from Vibrio vulnificus (strain CMCP6).